The sequence spans 303 residues: Ribosomal protein uL3 glutamine methyltransferase (303 aa).

This sequence belongs to the protein N5-glutamine methyltransferase family. PrmB subfamily.

It carries out the reaction L-glutaminyl-[ribosomal protein uL3] + S-adenosyl-L-methionine = N(5)-methyl-L-glutaminyl-[ribosomal protein uL3] + S-adenosyl-L-homocysteine + H(+). In terms of biological role, methylates large ribosomal subunit protein uL3 on a specific glutamine residue. The protein is Ribosomal protein uL3 glutamine methyltransferase of Neisseria meningitidis serogroup B (strain ATCC BAA-335 / MC58).